The following is a 975-amino-acid chain: Lateral signaling target protein 2 homolog (975 aa).

Disordered regions lie at residues 299–458 (PLGS…GTDE) and 504–523 (YGTAEQQGHQGLEEEEPSTS). Composition is skewed to low complexity over residues 302–352 (SSSI…TTNT), 365–376 (NNHNSNSNSSSN), 383–400 (TLRSPSMLSLSTTSTPTA), and 408–429 (PSHSIASTSSAATSSTNPPADW). Residues 430 to 458 (SDGDDEDEDDDDIDVDEEDPESSDDGTDE) are compositionally biased toward acidic residues. A phosphoserine mark is found at Ser540 and Ser541. Disordered regions lie at residues 556–633 (EEHM…SSLS) and 740–891 (DNVF…SPPA). Residues 564–602 (GRHHRHHQSHHHHHHHRHSHQHQHRQPHPHRTTRSGRKR) are compositionally biased toward basic residues. Over residues 621 to 633 (LASGDTSAASSLS) the composition is skewed to low complexity. Positions 751-770 (ATGQRHSAGASMQRNNTIDL) are enriched in polar residues. Ser796 carries the post-translational modification Phosphoserine. Composition is skewed to low complexity over residues 802 to 860 (AASS…PVSA) and 877 to 890 (PSSATSTSATLSPP). The FYVE-type zinc finger occupies 895–955 (DGKAPRCMAC…VCRDCYVREV (61 aa)). The Zn(2+) site is built by Cys901, Cys904, Cys917, Cys920, Cys925, Cys928, Cys947, and Cys950.

The protein belongs to the lst-2 family.

Negative regulator of epidermal growth factor receptor (EGFR) signaling. In Drosophila sechellia (Fruit fly), this protein is Lateral signaling target protein 2 homolog.